A 363-amino-acid chain; its full sequence is GDP-fucose transporter (363 aa).

Helical transmembrane passes span 30–47, 62–79, 126–148, 152–171, 180–202, 222–244, 251–273, and 307–326; these read VITAVSAYWVFSIGLVFL, FITWYQCLVTVFLCLFLS, VSFYYVGRSLTTVFNVVCTYLIL, TSGQAIGCCALIIFGFLLGV, LSYTGVIFGVLASLSVALNAIYT, LNALVLFLPLMLFNGEFGAVFYF, TFWILMTLGGVFGFMMGYVTGWQ, and LLWWTSNFVVLFGSGMYTYV. Positions 334 to 363 are disordered; that stretch reads KNSGASPASEAKSDKVKLLGRDGNAAEESV. Residues 344-353 are compositionally biased toward basic and acidic residues; the sequence is AKSDKVKLLG.

Belongs to the TPT transporter family. SLC35C subfamily.

The protein localises to the golgi apparatus membrane. Its function is as follows. Involved in GDP-fucose import from the cytoplasm into the Golgi lumen. The chain is GDP-fucose transporter from Caenorhabditis elegans.